The primary structure comprises 34 residues: Putative protein YmiB (34 aa).

A helical membrane pass occupies residues 7–24 (TAAKRIVFFIYLFVIQFW).

It localises to the membrane. The sequence is that of Putative protein YmiB (ymiB) from Escherichia coli (strain K12).